Consider the following 215-residue polypeptide: Chaperone protein TorD (215 aa).

The protein belongs to the TorD/DmsD family. TorD subfamily.

It localises to the cytoplasm. Involved in the biogenesis of TorA. Acts on TorA before the insertion of the molybdenum cofactor and, as a result, probably favors a conformation of the apoenzyme that is competent for acquiring the cofactor. This chain is Chaperone protein TorD, found in Aliivibrio fischeri (strain ATCC 700601 / ES114) (Vibrio fischeri).